Consider the following 148-residue polypeptide: Protein ADM2 (148 aa).

The signal sequence occupies residues 1–24; that stretch reads MARIPTAALGCISLLCLQLPGSLS. Residues 25 to 98 constitute a propeptide that is removed on maturation; sequence RSLGGDPRPV…HSGPRRHSGP (74 aa). 2 disordered regions span residues 26-57 and 70-101; these read SLGGDPRPVKPREPPARSPSSSLQPRHPAPRP and RGAGLAPVMGQPLRDGGRQHSGPRRHSGPRRT. Cysteine 110 and cysteine 115 form a disulfide bridge. A Tyrosine amide modification is found at tyrosine 147.

The protein belongs to the adrenomedullin family. In terms of tissue distribution, expressed in the esophagus, stomach, jejunum, ileum, ileocecum, ascending colon, transverse colon, descending colon and rectum. Expressed in myocardial cells of the heart, renal tubular cells, hypothalamus, and pituitary.

The protein localises to the secreted. Functionally, intermedin/ADM2 is a peptide hormone that plays a role as physiological regulator of gastrointestinal and cardiovascular bioactivities mediated by the CALCRL-RAMPs receptor complexes. Activates the cAMP-dependent pathway through interaction with CALCRL-RAMP3 receptor complex. This chain is Protein ADM2, found in Homo sapiens (Human).